Consider the following 519-residue polypeptide: Flavin-dependent halogenase rdc2 (519 aa).

An N-terminal signal peptide occupies residues 1–21 (MSVPKSCTILVAGGGPAGSYA). Residues Gly14, Ala17, and Glu47 each contribute to the FAD site. Positions 324 and 325 each coordinate chloride.

It belongs to the flavin-dependent halogenase family.

It participates in secondary metabolite biosynthesis. Its function is as follows. Flavin-dependent halogenase; part of the gene cluster that mediates the biosynthesis of radicicol, a resorcylic acid lactone (RAL) that irreversibly inhibits the HSP90 molecular chaperone, an important target for cancer chemotherapy. Within the cluster, rdc2 is involved in the chlorination of the resorcylic acid lactone (RAL) structure to convert monocillin I into radicicol. Also chlorinates monocillin II to produce 6-cholomonocillin II and monocilllin IV to produce 13-chloromonocillin IV. In contrast to most fungal halogenases, rdc2 has a broad substrate specificity and can accept a variety of macrolactones as the substrates to generate chlorinated derivatives, including dihydroresorcylide, zearalenone, curvularin, or even curcumin. Rdc2 is able to dichlorinate dihydroresorcylide and monocillin IV. Dihydroresorcylide is first chlorinated at position 11 to produce 11-chlorodihydroresorcylide which can be further chlorinated by rdc2 at possition 13. Mororeover, rdc2 can incorporate bromine into dihydroresorcylide to yield the corresponding mono- and di-brominated derivatives. Finally, rdc2 is also able to halogenate the isoquinolines 4-hydroxyisoquinoline and 6-hydroxyisoquinoline into 3-chloro-4-hydroxyisoquinoline and 5-chloro-6-hydroxyisoquinoline, respectively. The radicicol cluster encodes only two apparent post-PKS enzymes, a cytochrome P450 monooxygenase (rdc4) and a non-heme halogenase (rdc2) that could introduce the epoxide and the chlorine, respectively. If this cluster includes all the genes required for radicicol biosynthesis, the remaining structural features of radicicol are presumably generated by the PKSs rdc1 and rdc5. The C-2' ketone could arise if the R-PKS rdc5 and NR-PKS rdc1 each carry out four iterations, in contrast to the five iteration-three iteration split for the hypothemycin PKSs. The origin of the cis 5',6' double bond is not known. The radicicol R-PKS rdc5 ER domain may catalyze either double bond isomerization or reduction in the third iteration. This is Flavin-dependent halogenase rdc2 from Metacordyceps chlamydosporia (Nematophagous fungus).